Consider the following 262-residue polypeptide: Indole-3-glycerol phosphate synthase (262 aa).

The protein belongs to the TrpC family.

It catalyses the reaction 1-(2-carboxyphenylamino)-1-deoxy-D-ribulose 5-phosphate + H(+) = (1S,2R)-1-C-(indol-3-yl)glycerol 3-phosphate + CO2 + H2O. It participates in amino-acid biosynthesis; L-tryptophan biosynthesis; L-tryptophan from chorismate: step 4/5. This Clostridium acetobutylicum (strain ATCC 824 / DSM 792 / JCM 1419 / IAM 19013 / LMG 5710 / NBRC 13948 / NRRL B-527 / VKM B-1787 / 2291 / W) protein is Indole-3-glycerol phosphate synthase.